We begin with the raw amino-acid sequence, 369 residues long: Arsenite methyltransferase (369 aa).

Ser46 bears the Phosphoserine mark.

The protein belongs to the methyltransferase superfamily. Arsenite methyltransferase family.

Its subcellular location is the cytoplasm. The protein resides in the cytosol. It carries out the reaction arsenic triglutathione + [thioredoxin]-dithiol + S-adenosyl-L-methionine + 2 H2O = methylarsonous acid + [thioredoxin]-disulfide + 3 glutathione + S-adenosyl-L-homocysteine + H(+). The enzyme catalyses arsenic triglutathione + 2 [thioredoxin]-dithiol + 2 S-adenosyl-L-methionine + H2O = dimethylarsinous acid + 2 [thioredoxin]-disulfide + 3 glutathione + 2 S-adenosyl-L-homocysteine + 2 H(+). The catalysed reaction is arsenic triglutathione + 3 [thioredoxin]-dithiol + 3 S-adenosyl-L-methionine = trimethylarsine + 3 [thioredoxin]-disulfide + 3 glutathione + 3 S-adenosyl-L-homocysteine + 3 H(+). Functionally, catalyzes the transfer of a methyl group from AdoMet to trivalent arsenicals producing methylated and dimethylated arsenicals. It methylates arsenite to form methylarsonate, Me-AsO(3)H(2), which is reduced by methylarsonate reductase to methylarsonite, Me-As(OH)2. Methylarsonite is also a substrate and it is converted into the much less toxic compound dimethylarsinate (cacodylate), Me(2)As(O)-OH. This Rattus norvegicus (Rat) protein is Arsenite methyltransferase (As3mt).